Reading from the N-terminus, the 106-residue chain is uncharacterized protein (106 aa).

The first 25 residues, 1–25 (MSVIKKNIPAIGLCICAFFIHSAVG), serve as a signal peptide directing secretion.

This sequence to the N-terminal of the FimA/PapA family of fimbria proteins.

This is an uncharacterized protein from Salmonella typhi.